The sequence spans 999 residues: Testis anion transporter 1 (999 aa).

The Cytoplasmic portion of the chain corresponds to 1-93; it reads MQTERSLQSF…YRFKDWLLGD (93 aa). Residues 94 to 114 traverse the membrane as a helical segment; sequence LLAGLSVGLVQVPQGLILSLL. The Extracellular portion of the chain corresponds to 115–117; the sequence is TRQ. The chain crosses the membrane as a helical span at residues 118–138; that stretch reads LIPPLNVTYAAFCSSVIYVIF. Residue Gly139 is a topological domain, cytoplasmic. A helical transmembrane segment spans residues 140–160; sequence SCHQMSIGPFFLVSALMINVL. Over 161 to 200 the chain is Extracellular; it reads KDRPFNNGHLILGTFVKDDFSVPTFYLSYNRSLSMVASTT. N-linked (GlcNAc...) asparagine glycosylation occurs at Asn190. The chain crosses the membrane as a helical span at residues 201–221; it reads FLTGIIQLSMGMLGMGFMATY. Topologically, residues 222 to 230 are cytoplasmic; that stretch reads LPEAATSAY. Residues 231-251 form a helical membrane-spanning segment; that stretch reads LAAVALHIILAQMTCILGIMV. At 252 to 268 the chain is on the extracellular side; it reads SFHAGPISFIYNIINYC. The helical transmembrane segment at 269 to 289 threads the bilayer; that stretch reads IALPKANSTSILLFITSVVAL. Over 290–305 the chain is Cytoplasmic; that stretch reads RINKCIRITFNRYPIE. The helical transmembrane segment at 306–326 threads the bilayer; it reads FPMELLLILGFSLLTSKITMA. Residues 327–354 lie on the Extracellular side of the membrane; sequence TENSKMLMNMIPYSFVFPENPEFGILSR. The chain crosses the membrane as a helical span at residues 355-375; the sequence is VVLQALSLSFVSSFLLISLGK. Residues 376 to 390 lie on the Cytoplasmic side of the membrane; it reads KIANFHNYRTNSNQD. The chain crosses the membrane as a helical span at residues 391–411; sequence LIAIGLCNLLSSFFKCCVFTG. Residues 412-427 are Extracellular-facing; it reads SLSRTTIQDKSGGRQQ. A helical transmembrane segment spans residues 428-448; it reads FASLVGAGVMLLLMVKMESFF. The Cytoplasmic portion of the chain corresponds to 449–453; the sequence is HNLPN. A helical transmembrane segment spans residues 454 to 474; that stretch reads AVLAGIILSNVVPYLEAIYNL. Over 475 to 494 the chain is Extracellular; sequence PSLWRQDQYECIIWMVTFSS. A helical transmembrane segment spans residues 495–515; sequence AILLGLDVGLLISLAFTFFVI. Topologically, residues 516-544 are cytoplasmic; that stretch reads TIRSHRTKILVLGQIPNTNIYRNVNDYRE. Residues 541-796 enclose the STAS domain; it reads DYREVILIPG…LSLHDAVLFA (256 aa). The chain crosses the membrane as a helical span at residues 545–565; that stretch reads VILIPGVKIFQCCSSITFVNV. Residues 566–999 lie on the Extracellular side of the membrane; it reads YHLKQKVLKE…RKPHNYPNSP (434 aa). The interaction with RACGAP1 stretch occupies residues 661–999; sequence TVSSTSQRNI…RKPHNYPNSP (339 aa). 2 disordered regions span residues 678–701 and 893–999; these read EKAW…SESL and SELD…PNSP. The segment covering 684-696 has biased composition (pro residues); the sequence is NSPPRNSPLPPPE. Composition is skewed to acidic residues over residues 893-903 and 912-947; these read SELDPGSELDS and ELES…EPEP. Residues 973–982 are compositionally biased toward polar residues; sequence GSSNSQSRAP.

Belongs to the SLC26A/SulP transporter (TC 2.A.53) family. Interacts with RACGAP1. Interacts with CFTR; stimulates anion transport activity of CFTR. In terms of processing, N-glycosylated. In terms of tissue distribution, expressed in testis and epididymis. Located at the end of the midpiece of the flagella, known as the annulus, in spermatozoa.

It is found in the membrane. It catalyses the reaction sulfate(out) + chloride(in) = sulfate(in) + chloride(out). The enzyme catalyses oxalate(in) + chloride(out) = oxalate(out) + chloride(in). Its function is as follows. Antiporter that mediates the exchange of sulfate and oxalate against chloride ions across a membrane. Stimulates anion transport activity of CFTR. May cooperate with CFTR in the regulation of chloride and bicarbonate ions fluxes required for activation of the ADCY10/PKA pathway during sperm motility and sperm capacitation. May play a role in sperm tail differentiation and motility and hence male fertility. The protein is Testis anion transporter 1 of Mus musculus (Mouse).